Reading from the N-terminus, the 92-residue chain is Small ribosomal subunit protein uS19c (92 aa).

It belongs to the universal ribosomal protein uS19 family.

It localises to the plastid. Its subcellular location is the chloroplast. Functionally, protein S19 forms a complex with S13 that binds strongly to the 16S ribosomal RNA. The polypeptide is Small ribosomal subunit protein uS19c (Staurastrum punctulatum (Green alga)).